A 410-amino-acid chain; its full sequence is Dipeptidase 1 (410 aa).

Residues 1 to 16 (MWTSWWLWPLVAVCTA) form the signal peptide. Residues His36 and Asp38 each coordinate Zn(2+). N-linked (GlcNAc...) asparagine glycosylation occurs at Asn57. Cys87 and Cys170 are joined by a disulfide. Glu141 lines the Zn(2+) pocket. His168 is a binding site for substrate. Positions 214 and 235 each coordinate Zn(2+). An intrachain disulfide couples Cys242 to Cys274. Substrate is bound by residues Arg246 and Asp304. Ser384 is lipidated: GPI-anchor amidated serine. The propeptide at 385–410 (EAPSLHRRPGALLASLSLLLLSLGLL) is removed in mature form.

The protein belongs to the metallo-dependent hydrolases superfamily. Peptidase M19 family. In terms of assembly, homodimer; disulfide-linked. The cofactor is Zn(2+).

It localises to the apical cell membrane. The protein resides in the cell projection. Its subcellular location is the microvillus membrane. It carries out the reaction an L-aminoacyl-L-amino acid + H2O = 2 an L-alpha-amino acid. It catalyses the reaction leukotriene D4 + H2O = leukotriene E4 + glycine. The catalysed reaction is L-cystine-bis-glycine + 2 H2O = L-cystine + 2 glycine. The enzyme catalyses a beta-lactam + H2O = a substituted beta-amino acid. It carries out the reaction glycyldehydrophenylalanine + H2O = 2,3-didehydrophenylalanine + glycine. With respect to regulation, inhibited by L-penicillamine. Beta-lactamase activity is inhibited by cilastatin. Hydrolyzes a wide range of dipeptides including the conversion of leukotriene D4 to leukotriene E4. Hydrolyzes cystinyl-bis-glycine (cys-bis-gly) formed during glutathione degradation. Also possesses beta lactamase activity and hydrolytically inactivates beta-lactam antibiotics. Its function is as follows. Independently of its dipeptidase activity, acts as an adhesion receptor for neutrophil recruitment from bloodstream into inflamed lungs and liver. This chain is Dipeptidase 1 (DPEP1), found in Oryctolagus cuniculus (Rabbit).